Reading from the N-terminus, the 119-residue chain is MSVDKRTLIAVIGDEDTTTGLLLAGIGQITKETNEKNFFIYEDGKTTKEQILNNFINYTQERQDIAILLINQHIAEKIRSDIDNYTNAFPAILEIPSKDHPYDPEKDSVLKRVRRLFGE.

Belongs to the V-ATPase F subunit family. In terms of assembly, V-ATPase is a heteromultimeric enzyme composed of a peripheral catalytic V1 complex (components A to H) attached to an integral membrane V0 proton pore complex (components: a, c, c', c'', d, e, f and VOA1).

The protein localises to the vacuole membrane. In terms of biological role, subunit of the V1 complex of vacuolar(H+)-ATPase (V-ATPase), a multisubunit enzyme composed of a peripheral complex (V1) that hydrolyzes ATP and a membrane integral complex (V0) that translocates protons. V-ATPase is responsible for acidifying and maintaining the pH of intracellular compartments. The polypeptide is V-type proton ATPase subunit F (VMA7) (Vanderwaltozyma polyspora (strain ATCC 22028 / DSM 70294 / BCRC 21397 / CBS 2163 / NBRC 10782 / NRRL Y-8283 / UCD 57-17) (Kluyveromyces polysporus)).